Consider the following 192-residue polypeptide: UPF0301 protein BTH_I1462 (192 aa).

Belongs to the UPF0301 (AlgH) family.

The chain is UPF0301 protein BTH_I1462 from Burkholderia thailandensis (strain ATCC 700388 / DSM 13276 / CCUG 48851 / CIP 106301 / E264).